Here is a 143-residue protein sequence, read N- to C-terminus: Deoxyuridine 5'-triphosphate nucleotidohydrolase (143 aa).

Substrate is bound by residues 63–65 (RSG), Asn-76, 80–82 (TID), and Lys-90.

Belongs to the dUTPase family. Mg(2+) is required as a cofactor.

The catalysed reaction is dUTP + H2O = dUMP + diphosphate + H(+). Its pathway is pyrimidine metabolism; dUMP biosynthesis; dUMP from dCTP (dUTP route): step 2/2. Functionally, this enzyme is involved in nucleotide metabolism: it produces dUMP, the immediate precursor of thymidine nucleotides and it decreases the intracellular concentration of dUTP so that uracil cannot be incorporated into DNA. The chain is Deoxyuridine 5'-triphosphate nucleotidohydrolase from Clostridioides difficile (Peptoclostridium difficile).